Consider the following 464-residue polypeptide: 26S proteasome regulatory subunit 7 homolog B (464 aa).

An ATP-binding site is contributed by 246–253 (GPPGSGKT). A Glycyl lysine isopeptide (Lys-Gly) (interchain with G-Cter in ubiquitin) cross-link involves residue Lys452.

The protein belongs to the AAA ATPase family. In terms of assembly, component of the 19S regulatory particle (RP/PA700) base subcomplex of the 26S proteasome. The 26S proteasome is composed of a core protease (CP), known as the 20S proteasome, capped at one or both ends by the 19S regulatory particle (RP/PA700). The RP/PA700 complex is composed of at least 17 different subunits in two subcomplexes, the base and the lid, which form the portions proximal and distal to the 20S proteolytic core, respectively.

It localises to the cytoplasm. It is found in the nucleus. The 26S proteasome is involved in the ATP-dependent degradation of ubiquitinated proteins. The regulatory (or ATPase) complex confers ATP dependency and substrate specificity to the 26S complex. This chain is 26S proteasome regulatory subunit 7 homolog B (RPT1B), found in Arabidopsis thaliana (Mouse-ear cress).